The primary structure comprises 266 residues: 2-hydroxyisocaproyl-CoA dehydratase activator (266 aa).

ATP contacts are provided by residues 10–14 (STASK) and 102–104 (GQD). Cys125 lines the [4Fe-4S] cluster pocket. Position 134 (Asp134) interacts with ATP. Cys164 lines the [4Fe-4S] cluster pocket. 2 residues coordinate ATP: Gly215 and Gln241.

It belongs to the HadI activator family. Homodimer. [4Fe-4S] cluster serves as cofactor.

Involved in the reductive branch of L-leucine fermentation. Required for the activation of (R)-2-hydroxyisocaproyl-CoA dehydratase. The reduced activator transfers one electron to the dehydratase concomitant with hydrolysis of ATP. This protein is extremely sensitive towards oxygen. The sequence is that of 2-hydroxyisocaproyl-CoA dehydratase activator from Clostridioides difficile (Peptoclostridium difficile).